Reading from the N-terminus, the 359-residue chain is MTKLPKLSSNSSLLGLSSEDLEEFARQEGEKSFRGRQIHEWIYQRGAKSLDSISVLPKKWRDSLVRKGIQIGRLDEINRVVAEDETLKLLMGTFDGEIVETVGIPTDKRLTVCVSSQIGCPMGCKFCATGKGGLNRSLDVNEIVDQVISVRETMNRRPTHVVFMGMGEPLLNIQNVLDSIECLTSDIGIGQRKITVSTVGIPNTLSDLAKLAQDRLGRVQFTLAVSLHAPNQTLRELIIPSASSYPINSLLKDCKKYIDLTGRRVSFEYILLGGLNDKDIHAEQLANLMRGFQSHVNLIAYNPIAEENFKRPSQSRVNAFRELLENRGVAVSVRASRGRDKDAACGQLRRQTIDKIKIN.

E100 serves as the catalytic Proton acceptor. The region spanning T106–D340 is the Radical SAM core domain. A disulfide bridge connects residues C113 and C345. [4Fe-4S] cluster contacts are provided by C120, C124, and C127. S-adenosyl-L-methionine contacts are provided by residues G167–E168, S197, S226–H228, and N302. C345 serves as the catalytic S-methylcysteine intermediate.

It belongs to the radical SAM superfamily. RlmN family. [4Fe-4S] cluster is required as a cofactor.

The protein resides in the cytoplasm. The enzyme catalyses adenosine(2503) in 23S rRNA + 2 reduced [2Fe-2S]-[ferredoxin] + 2 S-adenosyl-L-methionine = 2-methyladenosine(2503) in 23S rRNA + 5'-deoxyadenosine + L-methionine + 2 oxidized [2Fe-2S]-[ferredoxin] + S-adenosyl-L-homocysteine. It carries out the reaction adenosine(37) in tRNA + 2 reduced [2Fe-2S]-[ferredoxin] + 2 S-adenosyl-L-methionine = 2-methyladenosine(37) in tRNA + 5'-deoxyadenosine + L-methionine + 2 oxidized [2Fe-2S]-[ferredoxin] + S-adenosyl-L-homocysteine. Specifically methylates position 2 of adenine 2503 in 23S rRNA and position 2 of adenine 37 in tRNAs. This chain is Probable dual-specificity RNA methyltransferase RlmN, found in Prochlorococcus marinus (strain NATL1A).